Reading from the N-terminus, the 746-residue chain is 1,4-alpha-glucan branching enzyme GlgB (746 aa).

D418 (nucleophile) is an active-site residue. Residue E471 is the Proton donor of the active site.

This sequence belongs to the glycosyl hydrolase 13 family. GlgB subfamily. Monomer.

The catalysed reaction is Transfers a segment of a (1-&gt;4)-alpha-D-glucan chain to a primary hydroxy group in a similar glucan chain.. It participates in glycan biosynthesis; glycogen biosynthesis. Its function is as follows. Catalyzes the formation of the alpha-1,6-glucosidic linkages in glycogen by scission of a 1,4-alpha-linked oligosaccharide from growing alpha-1,4-glucan chains and the subsequent attachment of the oligosaccharide to the alpha-1,6 position. The protein is 1,4-alpha-glucan branching enzyme GlgB of Nitrosospira multiformis (strain ATCC 25196 / NCIMB 11849 / C 71).